Here is a 224-residue protein sequence, read N- to C-terminus: Biosynthetic peptidoglycan transglycosylase (224 aa).

A helical transmembrane segment spans residues 12–32; sequence ILVVLAILPVFLLLVYSLPFV.

It belongs to the glycosyltransferase 51 family.

The protein resides in the cell inner membrane. It catalyses the reaction [GlcNAc-(1-&gt;4)-Mur2Ac(oyl-L-Ala-gamma-D-Glu-L-Lys-D-Ala-D-Ala)](n)-di-trans,octa-cis-undecaprenyl diphosphate + beta-D-GlcNAc-(1-&gt;4)-Mur2Ac(oyl-L-Ala-gamma-D-Glu-L-Lys-D-Ala-D-Ala)-di-trans,octa-cis-undecaprenyl diphosphate = [GlcNAc-(1-&gt;4)-Mur2Ac(oyl-L-Ala-gamma-D-Glu-L-Lys-D-Ala-D-Ala)](n+1)-di-trans,octa-cis-undecaprenyl diphosphate + di-trans,octa-cis-undecaprenyl diphosphate + H(+). It participates in cell wall biogenesis; peptidoglycan biosynthesis. Peptidoglycan polymerase that catalyzes glycan chain elongation from lipid-linked precursors. This is Biosynthetic peptidoglycan transglycosylase from Brucella melitensis biotype 1 (strain ATCC 23456 / CCUG 17765 / NCTC 10094 / 16M).